The following is a 359-amino-acid chain: 4-hydroxy-3-methylbut-2-en-1-yl diphosphate synthase (flavodoxin) (359 aa).

[4Fe-4S] cluster contacts are provided by cysteine 264, cysteine 267, cysteine 299, and glutamate 306.

It belongs to the IspG family. [4Fe-4S] cluster is required as a cofactor.

The enzyme catalyses (2E)-4-hydroxy-3-methylbut-2-enyl diphosphate + oxidized [flavodoxin] + H2O + 2 H(+) = 2-C-methyl-D-erythritol 2,4-cyclic diphosphate + reduced [flavodoxin]. Its pathway is isoprenoid biosynthesis; isopentenyl diphosphate biosynthesis via DXP pathway; isopentenyl diphosphate from 1-deoxy-D-xylulose 5-phosphate: step 5/6. Converts 2C-methyl-D-erythritol 2,4-cyclodiphosphate (ME-2,4cPP) into 1-hydroxy-2-methyl-2-(E)-butenyl 4-diphosphate. This Helicobacter pylori (strain Shi470) protein is 4-hydroxy-3-methylbut-2-en-1-yl diphosphate synthase (flavodoxin).